The chain runs to 570 residues: High-affinity hexose transporter HXT6 (570 aa).

The Cytoplasmic portion of the chain corresponds to 1–60 (MSQDAAIAEQTPVEHLSAVDSASHSVLSTPSNKAERDEIKAYGEGEEHEPVVEIPKRPAS). A helical transmembrane segment spans residues 61-81 (AYVTVSIMCIMIAFGGFVFGW). Over 82–116 (DTGTISGFINQTDFIRRFGMKHKDGTNYLSKVRTG) the chain is Extracellular. The N-linked (GlcNAc...) asparagine glycan is linked to asparagine 91. A helical transmembrane segment spans residues 117–137 (LIVSIFNIGCAIGGIILSKLG). The Cytoplasmic portion of the chain corresponds to 138-143 (DMYGRK). Residues 144–164 (VGLIVVVVIYIIGIIIQIASI) form a helical membrane-spanning segment. At 165–174 (NKWYQYFIGR) the chain is on the extracellular side. The chain crosses the membrane as a helical span at residues 175 to 195 (IISGLGVGGIAVLSPMLISEV). At 196-201 (SPKHLR) the chain is on the cytoplasmic side. A helical membrane pass occupies residues 202-222 (GTLVSCYQLMITAGIFLGYCT). Residues 223-236 (NFGTKNYSNSVQWR) are Extracellular-facing. Residue asparagine 228 is glycosylated (N-linked (GlcNAc...) asparagine). A helical membrane pass occupies residues 237–257 (VPLGLCFAWALFMIGGMTFVP). Residues 258 to 340 (ESPRYLAEVG…IQSLQQLTGD (83 aa)) lie on the Cytoplasmic side of the membrane. A helical transmembrane segment spans residues 341-357 (NYFFYYGTTIFKAVGLS). The Extracellular portion of the chain corresponds to 358 to 363 (DSFETS). The chain crosses the membrane as a helical span at residues 364–381 (IVLGIVNFASTFVGIYVV). Over 382–388 (ERYGRRT) the chain is Cytoplasmic. A helical transmembrane segment spans residues 389–409 (CLLWGAASMTACMVVYASVGV). Residues 410–431 (TRLWPNGQDQPSSKGAGNCMIV) lie on the Extracellular side of the membrane. The helical transmembrane segment at 432–452 (FACFYIFCFATTWAPIPYVVV) threads the bilayer. The Cytoplasmic segment spans residues 453–469 (SETFPLRVKSKAMSIAT). A helical transmembrane segment spans residues 470–490 (AANWLWGFLIGFFTPFITGAI). Position 491 (asparagine 491) is a topological domain, extracellular. A helical transmembrane segment spans residues 492-512 (FYYGYVFMGCLVFMFFYVLLV). Topologically, residues 513 to 570 (VPETKGLTLEEVNTMWEEGVLPWKSASWVPPSRRGANYDAEEMAHDDKPLYKRMFSTK) are cytoplasmic. A Glycyl lysine isopeptide (Lys-Gly) (interchain with G-Cter in ubiquitin) cross-link involves residue lysine 560.

It belongs to the major facilitator superfamily. Sugar transporter (TC 2.A.1.1) family.

The protein resides in the membrane. In terms of biological role, high-affinity glucose transporter. This is High-affinity hexose transporter HXT6 (HXT6) from Saccharomyces cerevisiae (strain ATCC 204508 / S288c) (Baker's yeast).